We begin with the raw amino-acid sequence, 226 residues long: PKHD-type hydroxylase Nwi_0701 (226 aa).

The Fe2OG dioxygenase domain occupies 78–178; the sequence is KVLPPRFNRY…RLAAFFWTQS (101 aa). Fe cation contacts are provided by His-96, Asp-98, and His-159. Arg-169 provides a ligand contact to 2-oxoglutarate.

Fe(2+) is required as a cofactor. The cofactor is L-ascorbate.

The sequence is that of PKHD-type hydroxylase Nwi_0701 from Nitrobacter winogradskyi (strain ATCC 25391 / DSM 10237 / CIP 104748 / NCIMB 11846 / Nb-255).